A 269-amino-acid polypeptide reads, in one-letter code: Hydroxyethylthiazole kinase (269 aa).

M43 is a substrate binding site. Residues R119 and S165 each contribute to the ATP site. Residue A192 participates in substrate binding.

It belongs to the Thz kinase family. Requires Mg(2+) as cofactor.

The enzyme catalyses 5-(2-hydroxyethyl)-4-methylthiazole + ATP = 4-methyl-5-(2-phosphooxyethyl)-thiazole + ADP + H(+). It participates in cofactor biosynthesis; thiamine diphosphate biosynthesis; 4-methyl-5-(2-phosphoethyl)-thiazole from 5-(2-hydroxyethyl)-4-methylthiazole: step 1/1. In terms of biological role, catalyzes the phosphorylation of the hydroxyl group of 4-methyl-5-beta-hydroxyethylthiazole (THZ). This is Hydroxyethylthiazole kinase from Glaesserella parasuis serovar 5 (strain SH0165) (Haemophilus parasuis).